The sequence spans 189 residues: Large ribosomal subunit protein uL5 (189 aa).

It belongs to the universal ribosomal protein uL5 family. As to quaternary structure, part of the 50S ribosomal subunit; part of the 5S rRNA/L5/L18/L25 subcomplex. Contacts the 5S rRNA and the P site tRNA. Forms a bridge to the 30S subunit in the 70S ribosome.

Functionally, this is one of the proteins that bind and probably mediate the attachment of the 5S RNA into the large ribosomal subunit, where it forms part of the central protuberance. In the 70S ribosome it contacts protein S13 of the 30S subunit (bridge B1b), connecting the 2 subunits; this bridge is implicated in subunit movement. Contacts the P site tRNA; the 5S rRNA and some of its associated proteins might help stabilize positioning of ribosome-bound tRNAs. In Kineococcus radiotolerans (strain ATCC BAA-149 / DSM 14245 / SRS30216), this protein is Large ribosomal subunit protein uL5.